The sequence spans 468 residues: UDP-N-acetylmuramate--L-alanine ligase (468 aa).

Position 121 to 127 (121 to 127) interacts with ATP; sequence GSHGKTT.

It belongs to the MurCDEF family.

The protein localises to the cytoplasm. The catalysed reaction is UDP-N-acetyl-alpha-D-muramate + L-alanine + ATP = UDP-N-acetyl-alpha-D-muramoyl-L-alanine + ADP + phosphate + H(+). It participates in cell wall biogenesis; peptidoglycan biosynthesis. Its function is as follows. Cell wall formation. This chain is UDP-N-acetylmuramate--L-alanine ligase, found in Borreliella burgdorferi (strain ATCC 35210 / DSM 4680 / CIP 102532 / B31) (Borrelia burgdorferi).